Reading from the N-terminus, the 173-residue chain is ATP synthase subunit beta, mitochondrial (173 aa).

Belongs to the ATPase alpha/beta chains family. In terms of assembly, F-type ATPases have 2 components, CF(1) - the catalytic core - and CF(0) - the membrane proton channel. CF(1) has five subunits: alpha(3), beta(3), gamma(1), delta(1), epsilon(1). CF(0) has three main subunits: a, b and c.

Its subcellular location is the mitochondrion. It is found in the mitochondrion inner membrane. It catalyses the reaction ATP + H2O + 4 H(+)(in) = ADP + phosphate + 5 H(+)(out). Its function is as follows. Mitochondrial membrane ATP synthase (F(1)F(0) ATP synthase or Complex V) produces ATP from ADP in the presence of a proton gradient across the membrane which is generated by electron transport complexes of the respiratory chain. F-type ATPases consist of two structural domains, F(1) - containing the extramembraneous catalytic core and F(0) - containing the membrane proton channel, linked together by a central stalk and a peripheral stalk. During catalysis, ATP synthesis in the catalytic domain of F(1) is coupled via a rotary mechanism of the central stalk subunits to proton translocation. Subunits alpha and beta form the catalytic core in F(1). Rotation of the central stalk against the surrounding alpha(3)beta(3) subunits leads to hydrolysis of ATP in three separate catalytic sites on the beta subunits. This chain is ATP synthase subunit beta, mitochondrial (ATPB), found in Actinidia deliciosa (Kiwi).